Reading from the N-terminus, the 125-residue chain is Holo-[acyl-carrier-protein] synthase (125 aa).

Residues Glu9 and Gln58 each contribute to the Mg(2+) site.

It belongs to the P-Pant transferase superfamily. AcpS family. Requires Mg(2+) as cofactor.

The protein localises to the cytoplasm. It catalyses the reaction apo-[ACP] + CoA = holo-[ACP] + adenosine 3',5'-bisphosphate + H(+). In terms of biological role, transfers the 4'-phosphopantetheine moiety from coenzyme A to a Ser of acyl-carrier-protein. The sequence is that of Holo-[acyl-carrier-protein] synthase from Rhodopirellula baltica (strain DSM 10527 / NCIMB 13988 / SH1).